Consider the following 84-residue polypeptide: Transmembrane protein EP84R (84 aa).

Transmembrane regions (helical) follow at residues 31-51 (VIGV…IIIL) and 60-80 (AASI…FLIY).

The protein belongs to the asfivirus EP84R family.

It localises to the virion membrane. In Ornithodoros (relapsing fever ticks), this protein is Transmembrane protein EP84R.